The primary structure comprises 456 residues: tRNA-2-methylthio-N(6)-dimethylallyladenosine synthase (456 aa).

One can recognise an MTTase N-terminal domain in the interval 9–126 (KKLYIKTHGC…LPEMMETKKS (118 aa)). [4Fe-4S] cluster-binding residues include Cys-18, Cys-55, Cys-89, Cys-163, Cys-167, and Cys-170. One can recognise a Radical SAM core domain in the interval 149 to 381 (DADGVSAFVS…QDRITQQAMA (233 aa)). In terms of domain architecture, TRAM spans 384 to 448 (RRMVGNTERI…PNSLRGSLIA (65 aa)).

This sequence belongs to the methylthiotransferase family. MiaB subfamily. Monomer. Requires [4Fe-4S] cluster as cofactor.

Its subcellular location is the cytoplasm. The enzyme catalyses N(6)-dimethylallyladenosine(37) in tRNA + (sulfur carrier)-SH + AH2 + 2 S-adenosyl-L-methionine = 2-methylsulfanyl-N(6)-dimethylallyladenosine(37) in tRNA + (sulfur carrier)-H + 5'-deoxyadenosine + L-methionine + A + S-adenosyl-L-homocysteine + 2 H(+). Its function is as follows. Catalyzes the methylthiolation of N6-(dimethylallyl)adenosine (i(6)A), leading to the formation of 2-methylthio-N6-(dimethylallyl)adenosine (ms(2)i(6)A) at position 37 in tRNAs that read codons beginning with uridine. The protein is tRNA-2-methylthio-N(6)-dimethylallyladenosine synthase of Cellvibrio japonicus (strain Ueda107) (Pseudomonas fluorescens subsp. cellulosa).